The primary structure comprises 434 residues: Pre-mRNA-splicing factor PRP46 (434 aa).

WD repeat units follow at residues 120 to 160 (GHTG…LKIT), 163 to 202 (GHVMSVRDIAISKRHPYMFSASEDKLVKCWDLERNTAIRD), 205 to 244 (GHLSGVHTVDVHPSLDIIATAGRDAVVRLWDIRSRSEIMV), 247 to 288 (GHKS…KVLT), 290 to 329 (HSRNIRDLTLHPAEFSFASVSTNDVRSWKLPEGQLLTNFQ), 331 to 369 (QNTGILNTVSINHDNVLLAGGDDGTLCFYDYKTGHKYQS), and 380 to 419 (ESERSILCSTFDVTGTRLITGEGDKSIKIWKQVPDATEDT).

Belongs to the WD repeat PRL1/PRL2 family. In terms of assembly, associated with the spliceosome.

The protein resides in the cytoplasm. The protein localises to the nucleus. Functionally, involved in pre-mRNA splicing and required for cell cycle progression at G2/M. The chain is Pre-mRNA-splicing factor PRP46 (PRP46) from Kluyveromyces lactis (strain ATCC 8585 / CBS 2359 / DSM 70799 / NBRC 1267 / NRRL Y-1140 / WM37) (Yeast).